Here is a 156-residue protein sequence, read N- to C-terminus: MTVININEIMTHLLPGQTIAGLDLGTKTIGIAISDMGLTVSNPRPVLQRKKFTEDAHRLIKIFDHENVGVIVIGLPLNMNGSSGSRVQATRAFVSNMKAYTKIPFVFWDERLSTIAAERSLLEMNVSRIKRARRIDSAAAAFILQGALNRIENLHS.

This sequence belongs to the YqgF nuclease family.

Its subcellular location is the cytoplasm. Could be a nuclease involved in processing of the 5'-end of pre-16S rRNA. In Bartonella tribocorum (strain CIP 105476 / IBS 506), this protein is Putative pre-16S rRNA nuclease.